The following is a 347-amino-acid chain: DNA-directed RNA polymerase subunit alpha (347 aa).

The tract at residues 1-226 (MLISQRPTLS…ELFGLARELN (226 aa)) is alpha N-terminal domain (alpha-NTD). The segment at 243-347 (HIASFALPID…SQDYAETEQL (105 aa)) is alpha C-terminal domain (alpha-CTD). Residues 326-347 (TTGTWSTDGAYDSQDYAETEQL) are disordered.

Belongs to the RNA polymerase alpha chain family. As to quaternary structure, homodimer. The RNAP catalytic core consists of 2 alpha, 1 beta, 1 beta' and 1 omega subunit. When a sigma factor is associated with the core the holoenzyme is formed, which can initiate transcription.

The enzyme catalyses RNA(n) + a ribonucleoside 5'-triphosphate = RNA(n+1) + diphosphate. DNA-dependent RNA polymerase catalyzes the transcription of DNA into RNA using the four ribonucleoside triphosphates as substrates. The sequence is that of DNA-directed RNA polymerase subunit alpha from Mycobacterium leprae (strain TN).